The sequence spans 112 residues: Colipase (112 aa).

A signal peptide spans 1-17 (MEKILVLLLVALAVVYA). The propeptide at 18-22 (VPDPR) is enterostatin, activation peptide. Intrachain disulfides connect C34–C45, C40–C56, C44–C78, C66–C86, and C80–C104.

This sequence belongs to the colipase family. As to quaternary structure, forms a 1:1 stoichiometric complex with pancreatic lipase. In terms of tissue distribution, expressed by the pancreas.

It is found in the secreted. Its function is as follows. Colipase is a cofactor of pancreatic lipase. It allows the lipase to anchor itself to the lipid-water interface. Without colipase the enzyme is washed off by bile salts, which have an inhibitory effect on the lipase. Enterostatin has a biological activity as a satiety signal. The chain is Colipase (CLPS) from Canis lupus familiaris (Dog).